The following is a 221-amino-acid chain: Large ribosomal subunit protein uL3 (221 aa).

This sequence belongs to the universal ribosomal protein uL3 family. Part of the 50S ribosomal subunit. Forms a cluster with proteins L14 and L19.

Functionally, one of the primary rRNA binding proteins, it binds directly near the 3'-end of the 23S rRNA, where it nucleates assembly of the 50S subunit. The chain is Large ribosomal subunit protein uL3 from Chlamydia muridarum (strain MoPn / Nigg).